The sequence spans 803 residues: Ras GTPase-activating protein 4 (803 aa).

C2 domains are found at residues 1–105 (MAKR…SGWA) and 116–232 (VQGE…EGWF). Asp-21, Asp-27, Asp-74, Asp-76, Ser-79, Asp-82, Asp-149, Asp-155, Asp-202, Asp-204, Ser-207, and Asp-210 together coordinate Ca(2+). The 229-residue stretch at 318–546 (GLAKDFLDLL…AQLKDFITKL (229 aa)) folds into the Ras-GAP domain. One can recognise a PH domain in the interval 566 to 673 (PPVKEGPLFI…WLSALRKVSI (108 aa)). The Btk-type zinc finger occupies 675–711 (NTGLLGSYHPGVFRGDKWSCCHQKEKTGQGCDKTRSR). Zn(2+) is bound by residues His-683, Cys-694, Cys-695, and Cys-705. The disordered stretch occupies residues 781 to 803 (EAHSSSPAGSPPSEPNCLLELQT).

Ca(2+) is required as a cofactor. In terms of tissue distribution, widely expressed.

Its subcellular location is the cytoplasm. The protein resides in the cytosol. It is found in the cell membrane. In terms of biological role, ca(2+)-dependent Ras GTPase-activating protein, that switches off the Ras-MAPK pathway following a stimulus that elevates intracellular calcium. Functions as an adaptor for Cdc42 and Rac1 during FcR-mediated phagocytosis. This chain is Ras GTPase-activating protein 4 (RASA4), found in Homo sapiens (Human).